A 245-amino-acid polypeptide reads, in one-letter code: Probable phosphatase ECA2529 (245 aa).

Positions 7, 9, 15, 40, 73, 101, 131, 192, and 194 each coordinate Zn(2+).

The protein belongs to the PHP family. In terms of assembly, homotrimer. The cofactor is Zn(2+).

In Pectobacterium atrosepticum (strain SCRI 1043 / ATCC BAA-672) (Erwinia carotovora subsp. atroseptica), this protein is Probable phosphatase ECA2529.